Consider the following 93-residue polypeptide: Putative nuclease p44 (93 aa).

Positions 5 to 84 constitute a VRR-NUC domain; sequence REDSIEKHLV…HQVIVLDSQD (80 aa).

It depends on Mg(2+) as a cofactor.

Nuclease. In Escherichia coli (Bacteriophage APSE-1), this protein is Putative nuclease p44 (44).